We begin with the raw amino-acid sequence, 366 residues long: GTP cyclohydrolase 1 type 2 homolog (366 aa).

Positions 64, 65, 102, 326, and 329 each coordinate Zn(2+).

Belongs to the GTP cyclohydrolase I type 2/NIF3 family. In terms of assembly, homohexamer.

The protein is GTP cyclohydrolase 1 type 2 homolog of Staphylococcus aureus (strain MRSA252).